The following is a 407-amino-acid chain: MTTSGALFPSLVPGSRGSSTKYLVEFRAGKMSLKGTTVTPDKRKGLVYIQQTDDSLIHFCWKDRTSGTVEDDLIIFPDDCEFKRVPQCPSGRVYVLKFKAGSKRLFFWMQEPKTDQDEEHCRKVNECLNNPPMPGTLGASGSSGHELSALGGEGGLQSLLGNMSHSQLMQLIGPAGLGGLGGLGALTGPGLASLLGSSGPPASSSSSSSRSQSAAVTPSSTTSSARATPAPSAPAAASATSPSPAPSSGNGTSTAASPTQPIQLSDLQSILATMNVPAGPGGSQQVDLASVLTPEIMAPILANADVQERLLPYLPSGESLPQTAEEIQNTLTSPQFQQALGMFSAALASGQLGPLMCQFGLPAEAVEAANKGDVEAFAKAMQNNAKSDPKEGDTKDKKDEEEDMSLD.

An N-acetylthreonine modification is found at threonine 2. Residue serine 15 is modified to Phosphoserine. Positions 18 to 131 constitute a Pru domain; it reads SSTKYLVEFR…RKVNECLNNP (114 aa). Lysine 34 participates in a covalent cross-link: Glycyl lysine isopeptide (Lys-Gly) (interchain with G-Cter in ubiquitin). Disordered stretches follow at residues 130–150, 196–259, and 381–407; these read NPPM…LSAL, GSSG…ASPT, and MQNN…MSLD. Low complexity-rich tracts occupy residues 137–150 and 196–248; these read LGAS…LSAL and GSSG…APSS. 2 positions are modified to phosphoserine: serine 140 and serine 211. Threonine 217 carries the phosphothreonine modification. The segment covering 249 to 259 has biased composition (polar residues); the sequence is GNGTSTAASPT. The region spanning 277–391 is the DEUBAD domain; it reads PAGPGGSQQV…QNNAKSDPKE (115 aa). Residues 362-407 are interaction with UCHL5; the sequence is PAEAVEAANKGDVEAFAKAMQNNAKSDPKEGDTKDKKDEEEDMSLD. Positions 387–398 are enriched in basic and acidic residues; that stretch reads SDPKEGDTKDKK. Serine 405 carries the phosphoserine modification.

The protein belongs to the ADRM1 family. In terms of assembly, component of the 19S proteasome regulatory particle complex. The 26S proteasome consists of a 20S core particle (CP) and two 19S regulatory subunits (RP). Interacts with the proteasomal scaffolding protein PSMD1. Interacts with deubiquitinase UCHL5; this interaction activates the auto-inhibited UCHL5 by deoligomerizing it. Interacts with UBQLN2 and ubiquitin. In terms of processing, ubiquitinated by UBE3C in response to proteotoxic stress. In terms of tissue distribution, widely expressed.

It localises to the cytoplasm. The protein resides in the nucleus. Its function is as follows. Component of the 26S proteasome, a multiprotein complex involved in the ATP-dependent degradation of ubiquitinated proteins. This complex plays a key role in the maintenance of protein homeostasis by removing misfolded or damaged proteins, which could impair cellular functions, and by removing proteins whose functions are no longer required. Therefore, the proteasome participates in numerous cellular processes, including cell cycle progression, apoptosis, or DNA damage repair. Within the complex, functions as a proteasomal ubiquitin receptor. Engages and activates 19S-associated deubiquitinases UCHL5 and PSMD14 during protein degradation. UCHL5 reversibly associate with the 19S regulatory particle whereas PSMD14 is an intrinsic subunit of the proteasome lid subcomplex. The polypeptide is Proteasomal ubiquitin receptor ADRM1 (Adrm1) (Rattus norvegicus (Rat)).